An 804-amino-acid chain; its full sequence is Phenylalanine--tRNA ligase beta subunit (804 aa).

Residues 39–147 (GEGLDSVVTA…PDCEPGQPVF (109 aa)) form the tRNA-binding domain. A B5 domain is found at 401-480 (LAERKVTLAV…RLNGYDNIPV (80 aa)). Mg(2+) contacts are provided by Asp-458, Asp-464, Glu-467, and Glu-468. An FDX-ACB domain is found at 711-804 (SRFPQVARDS…LIAKLGAEIR (94 aa)).

It belongs to the phenylalanyl-tRNA synthetase beta subunit family. Type 1 subfamily. In terms of assembly, tetramer of two alpha and two beta subunits. Mg(2+) is required as a cofactor.

The protein localises to the cytoplasm. The enzyme catalyses tRNA(Phe) + L-phenylalanine + ATP = L-phenylalanyl-tRNA(Phe) + AMP + diphosphate + H(+). The protein is Phenylalanine--tRNA ligase beta subunit of Syntrophotalea carbinolica (strain DSM 2380 / NBRC 103641 / GraBd1) (Pelobacter carbinolicus).